Reading from the N-terminus, the 1188-residue chain is DNA-directed RNA polymerase subunit beta (1188 aa).

Belongs to the RNA polymerase beta chain family. The RNAP catalytic core consists of 2 alpha, 1 beta, 1 beta' and 1 omega subunit. When a sigma factor is associated with the core the holoenzyme is formed, which can initiate transcription.

The enzyme catalyses RNA(n) + a ribonucleoside 5'-triphosphate = RNA(n+1) + diphosphate. In terms of biological role, DNA-dependent RNA polymerase catalyzes the transcription of DNA into RNA using the four ribonucleoside triphosphates as substrates. The sequence is that of DNA-directed RNA polymerase subunit beta from Streptococcus equi subsp. zooepidemicus (strain H70).